The chain runs to 390 residues: 2-oxoisovalerate dehydrogenase subunit beta, mitochondrial (390 aa).

The N-terminal 48 residues, 1–48 (MAAVAARAGGLLRLGAAGAERRRRGLRCAALVQGFLQPAVDDASQKRR), are a transit peptide targeting the mitochondrion. Tyr-150 lines the thiamine diphosphate pocket. The K(+) site is built by Gly-176, Leu-178, Thr-179, Cys-226, and Asp-229. Lys-230 carries the post-translational modification N6-acetyllysine. Position 231 (Asn-231) interacts with K(+). N6-acetyllysine is present on Lys-239.

In terms of assembly, heterotetramer of 2 alpha/BCKDHA and 2 beta chains/BCKDHB that forms the branched-chain alpha-keto acid decarboxylase (E1) component of the BCKD complex. The branched-chain alpha-ketoacid dehydrogenase is a large complex composed of three major building blocks E1, E2 and E3. It is organized around E2, a 24-meric cubic core composed of DBT, to which are associated 6 to 12 copies of E1, and approximately 6 copies of the dehydrogenase E3, a DLD dimer. Thiamine diphosphate is required as a cofactor.

It is found in the mitochondrion matrix. It carries out the reaction N(6)-[(R)-lipoyl]-L-lysyl-[protein] + 3-methyl-2-oxobutanoate + H(+) = N(6)-[(R)-S(8)-2-methylpropanoyldihydrolipoyl]-L-lysyl-[protein] + CO2. Together with BCKDHA forms the heterotetrameric E1 subunit of the mitochondrial branched-chain alpha-ketoacid dehydrogenase (BCKD) complex. The BCKD complex catalyzes the multi-step oxidative decarboxylation of alpha-ketoacids derived from the branched-chain amino-acids valine, leucine and isoleucine producing CO2 and acyl-CoA which is subsequently utilized to produce energy. The E1 subunit catalyzes the first step with the decarboxylation of the alpha-ketoacid forming an enzyme-product intermediate. A reductive acylation mediated by the lipoylamide cofactor of E2 extracts the acyl group from the E1 active site for the next step of the reaction. The sequence is that of 2-oxoisovalerate dehydrogenase subunit beta, mitochondrial from Rattus norvegicus (Rat).